Reading from the N-terminus, the 473-residue chain is Probable serine/threonine-protein kinase glkA (473 aa).

The interval 1 to 84 (MTIPTDNNSS…QSSSTATVNS (84 aa)) is disordered. A compositionally biased stretch (low complexity) spans 7 to 84 (NNSSNNKGYN…QSSSTATVNS (78 aa)). Residues 91–366 (YEIIKQVGQG…IDEIIAHPFL (276 aa)) form the Protein kinase domain. ATP is bound by residues 97-105 (VGQGTFGKV) and lysine 119. Aspartate 208 (proton acceptor) is an active-site residue. 2 disordered regions span residues 389–418 (GKSS…SNNK) and 437–473 (SSNL…TNTI). Low complexity predominate over residues 442-466 (SIDNSNNGKSSSSSNNIPSLNNSNN).

This sequence belongs to the protein kinase superfamily. CMGC Ser/Thr protein kinase family. GSK-3 subfamily.

The catalysed reaction is L-seryl-[tau protein] + ATP = O-phospho-L-seryl-[tau protein] + ADP + H(+). The enzyme catalyses L-threonyl-[tau protein] + ATP = O-phospho-L-threonyl-[tau protein] + ADP + H(+). The polypeptide is Probable serine/threonine-protein kinase glkA (glkA) (Dictyostelium discoideum (Social amoeba)).